The primary structure comprises 92 residues: MSTSDFEERVVTVPLRDVSAVPTHERAGRAMTLIREHLAQHFRVDESDIRLDPSLNETVWARGSQNPPSKLRVRAARFDEDGESIVEAEPAE.

Belongs to the eukaryotic ribosomal protein eL31 family.

The polypeptide is Large ribosomal subunit protein eL31 (Haloquadratum walsbyi (strain DSM 16790 / HBSQ001)).